Consider the following 235-residue polypeptide: Type II secretion system protein N (235 aa).

Residues 1 to 34 (MIPRRSSDITIKTRSDVLPFSGASSRWLQRYAPA) lie on the Cytoplasmic side of the membrane. The chain crosses the membrane as a helical; Signal-anchor for type II membrane protein span at residues 35–55 (LLAVALIIAMSISLAWQAAGW). Topologically, residues 56–235 (LRLQRSPVAV…EPTTTPTESD (180 aa)) are periplasmic. A disordered region spans residues 205-235 (DALRQQMEATPIAEPAEEDSSEPTTTPTESD). Positions 226 to 235 (EPTTTPTESD) are enriched in low complexity.

The protein resides in the cell inner membrane. Involved in a type II secretion system (T2SS, formerly general secretion pathway, GSP) for the export of proteins. Required for the translocation of a variety of enzymes across the outer membrane. This is Type II secretion system protein N (xcpP) from Pseudomonas aeruginosa (strain ATCC 15692 / DSM 22644 / CIP 104116 / JCM 14847 / LMG 12228 / 1C / PRS 101 / PAO1).